A 681-amino-acid polypeptide reads, in one-letter code: Transketolase 2 (681 aa).

His30 lines the substrate pocket. Thiamine diphosphate is bound by residues His69 and 116-118 (GPL). Asp157 lines the Mg(2+) pocket. Residues Gly158 and Asn187 each contribute to the thiamine diphosphate site. Mg(2+)-binding residues include Asn187 and Ile189. 3 residues coordinate substrate: His263, Arg359, and Ser386. His263 contacts thiamine diphosphate. Residues Glu418 and Phe445 each coordinate thiamine diphosphate. The active-site Proton donor is Glu418. His469, Asp477, and Arg528 together coordinate substrate.

The protein belongs to the transketolase family. As to quaternary structure, homodimer. Mg(2+) serves as cofactor. It depends on Ca(2+) as a cofactor. Requires Mn(2+) as cofactor. The cofactor is Co(2+). Thiamine diphosphate is required as a cofactor.

It carries out the reaction D-sedoheptulose 7-phosphate + D-glyceraldehyde 3-phosphate = aldehydo-D-ribose 5-phosphate + D-xylulose 5-phosphate. Functionally, catalyzes the transfer of a two-carbon ketol group from a ketose donor to an aldose acceptor, via a covalent intermediate with the cofactor thiamine pyrophosphate. This is Transketolase 2 (TKL2) from Saccharomyces cerevisiae (strain ATCC 204508 / S288c) (Baker's yeast).